Reading from the N-terminus, the 222-residue chain is Putative N-acetylmannosamine-6-phosphate 2-epimerase (222 aa).

Belongs to the NanE family.

It carries out the reaction an N-acyl-D-glucosamine 6-phosphate = an N-acyl-D-mannosamine 6-phosphate. Its pathway is amino-sugar metabolism; N-acetylneuraminate degradation; D-fructose 6-phosphate from N-acetylneuraminate: step 3/5. Its function is as follows. Converts N-acetylmannosamine-6-phosphate (ManNAc-6-P) to N-acetylglucosamine-6-phosphate (GlcNAc-6-P). This is Putative N-acetylmannosamine-6-phosphate 2-epimerase from Oceanobacillus iheyensis (strain DSM 14371 / CIP 107618 / JCM 11309 / KCTC 3954 / HTE831).